The sequence spans 99 residues: Mitochondrial import receptor subunit TOM9-2 (99 aa).

The Cytoplasmic segment spans residues 2 to 51; sequence AAKRIGAGKSGGGDPNILARISNSEIVSQGRRAAGDAVEVSKKLLRSTGK. The helical transmembrane segment at 52 to 69 threads the bilayer; it reads AAWIAGTTFLILVVPLII. Topologically, residues 70-99 are mitochondrial intermembrane; the sequence is EMDREAQINEIELQQASLLGAPPSPMQRGL.

This sequence belongs to the Tom22 family. As to quaternary structure, forms part of the preprotein translocase complex of the outer mitochondrial membrane (TOM complex) which consists of at least 6 different proteins (TOM5, TOM6, TOM7, TOM20, TOM22/TOM9 and TOM40). In terms of tissue distribution, expressed in young cotyledons, roots, flowers and leaves.

It is found in the mitochondrion outer membrane. In terms of biological role, central component of the receptor complex responsible for the recognition and translocation of cytosolically synthesized mitochondrial preproteins. Together with TOM20 functions as the transit peptide receptor at the surface of the mitochondrion outer membrane and facilitates the movement of preproteins into the translocation pore. The polypeptide is Mitochondrial import receptor subunit TOM9-2 (TOM9-2) (Arabidopsis thaliana (Mouse-ear cress)).